A 163-amino-acid chain; its full sequence is Bacterial microcompartment assembly protein PduM (163 aa).

It belongs to the PduM family. Interacts with shell protein PduK.

It is found in the bacterial microcompartment. It functions in the pathway polyol metabolism; 1,2-propanediol degradation. In terms of biological role, plays an essential role in assembly and/or stability of the bacterial microcompartment (BMC) dedicated to 1,2-propanediol (1,2-PD) degradation. Overexpression impairs BMC formation. The 1,2-PD-specific bacterial microcompartment (BMC) concentrates low levels of 1,2-PD catabolic enzymes, concentrates volatile reaction intermediates thus enhancing pathway flux and keeps the level of toxic, mutagenic propionaldehyde low. This chain is Bacterial microcompartment assembly protein PduM, found in Salmonella typhimurium (strain LT2 / SGSC1412 / ATCC 700720).